The sequence spans 95 residues: Pyrimidine/purine nucleoside phosphorylase (95 aa).

The protein belongs to the nucleoside phosphorylase PpnP family.

The catalysed reaction is a purine D-ribonucleoside + phosphate = a purine nucleobase + alpha-D-ribose 1-phosphate. The enzyme catalyses adenosine + phosphate = alpha-D-ribose 1-phosphate + adenine. It carries out the reaction cytidine + phosphate = cytosine + alpha-D-ribose 1-phosphate. It catalyses the reaction guanosine + phosphate = alpha-D-ribose 1-phosphate + guanine. The catalysed reaction is inosine + phosphate = alpha-D-ribose 1-phosphate + hypoxanthine. The enzyme catalyses thymidine + phosphate = 2-deoxy-alpha-D-ribose 1-phosphate + thymine. It carries out the reaction uridine + phosphate = alpha-D-ribose 1-phosphate + uracil. It catalyses the reaction xanthosine + phosphate = alpha-D-ribose 1-phosphate + xanthine. Catalyzes the phosphorolysis of diverse nucleosides, yielding D-ribose 1-phosphate and the respective free bases. Can use uridine, adenosine, guanosine, cytidine, thymidine, inosine and xanthosine as substrates. Also catalyzes the reverse reactions. The chain is Pyrimidine/purine nucleoside phosphorylase from Vibrio cholerae serotype O1 (strain ATCC 39315 / El Tor Inaba N16961).